Consider the following 387-residue polypeptide: Glucose-1-phosphate adenylyltransferase (387 aa).

Alpha-D-glucose 1-phosphate is bound by residues tyrosine 99, glycine 164, 179 to 180, and serine 190; that span reads EK.

Belongs to the bacterial/plant glucose-1-phosphate adenylyltransferase family. In terms of assembly, homotetramer.

It carries out the reaction alpha-D-glucose 1-phosphate + ATP + H(+) = ADP-alpha-D-glucose + diphosphate. It participates in glycan biosynthesis; glycogen biosynthesis. Involved in the biosynthesis of ADP-glucose, a building block required for the elongation reactions to produce glycogen. Catalyzes the reaction between ATP and alpha-D-glucose 1-phosphate (G1P) to produce pyrophosphate and ADP-Glc. This is Glucose-1-phosphate adenylyltransferase from Geobacillus stearothermophilus (Bacillus stearothermophilus).